The following is a 441-amino-acid chain: Cysteine proteinase (441 aa).

Residues C249 and C290 are joined by a disulfide bond. The active site involves C252. N270 and N345 each carry an N-linked (GlcNAc...) asparagine glycan. Catalysis depends on residues H381 and N403.

The protein belongs to the peptidase C1 family.

The sequence is that of Cysteine proteinase (TACP) from Theileria annulata.